Consider the following 966-residue polypeptide: Probable transport protein MmpL11 (966 aa).

Transmembrane regions (helical) follow at residues 13 to 33, 188 to 208, 214 to 234, 235 to 255, 279 to 299, 311 to 331, 373 to 393, 527 to 547, 557 to 577, 595 to 615, 646 to 666, and 668 to 688; these read WLVF…AMTQ, IILM…IPLA, VVIT…SVFV, TSTV…FILM, GLAV…IYLI, AILA…AVLA, ALAA…MVLG, TQPL…LISI, VLMT…VFQW, VPPL…IFLL, AALI…PLVA, and IGVA…LVLV.

It belongs to the resistance-nodulation-cell division (RND) (TC 2.A.6) family. MmpL subfamily.

It is found in the cell membrane. The sequence is that of Probable transport protein MmpL11 (mmpL11) from Mycobacterium bovis (strain ATCC BAA-935 / AF2122/97).